A 426-amino-acid chain; its full sequence is Serine--tRNA ligase (426 aa).

Position 231 to 233 (231 to 233 (TSE)) interacts with L-serine. Residue 262–264 (RSE) participates in ATP binding. Glu-285 is a binding site for L-serine. 349 to 352 (EISS) lines the ATP pocket. Residue Ser-385 coordinates L-serine.

It belongs to the class-II aminoacyl-tRNA synthetase family. Type-1 seryl-tRNA synthetase subfamily. In terms of assembly, homodimer. The tRNA molecule binds across the dimer.

It localises to the cytoplasm. The catalysed reaction is tRNA(Ser) + L-serine + ATP = L-seryl-tRNA(Ser) + AMP + diphosphate + H(+). It carries out the reaction tRNA(Sec) + L-serine + ATP = L-seryl-tRNA(Sec) + AMP + diphosphate + H(+). It functions in the pathway aminoacyl-tRNA biosynthesis; selenocysteinyl-tRNA(Sec) biosynthesis; L-seryl-tRNA(Sec) from L-serine and tRNA(Sec): step 1/1. In terms of biological role, catalyzes the attachment of serine to tRNA(Ser). Is also able to aminoacylate tRNA(Sec) with serine, to form the misacylated tRNA L-seryl-tRNA(Sec), which will be further converted into selenocysteinyl-tRNA(Sec). The polypeptide is Serine--tRNA ligase (Legionella pneumophila (strain Lens)).